A 332-amino-acid polypeptide reads, in one-letter code: Ribosomal RNA small subunit methyltransferase H (332 aa).

S-adenosyl-L-methionine contacts are provided by residues 37–39 (GGY), Asp-55, Phe-82, Asp-103, and Gln-110. The segment at 281 to 332 (TKRPVTPSDEETAANPRARSAKLRAGERTAAPAQPEAPLPHWPTLASVMGRR) is disordered.

The protein belongs to the methyltransferase superfamily. RsmH family.

The protein resides in the cytoplasm. The catalysed reaction is cytidine(1402) in 16S rRNA + S-adenosyl-L-methionine = N(4)-methylcytidine(1402) in 16S rRNA + S-adenosyl-L-homocysteine + H(+). Functionally, specifically methylates the N4 position of cytidine in position 1402 (C1402) of 16S rRNA. This chain is Ribosomal RNA small subunit methyltransferase H, found in Rhodopseudomonas palustris (strain BisA53).